The sequence spans 620 residues: Sorbicillinoid biosynthetic cluster transcription factor 1 (620 aa).

Positions 10–37 (CEECRRRKARCDRVRPQCGICADAGRTC) form a DNA-binding region, zn(2)-C6 fungal-type. Residues 285-308 (HDDETSPNENSGSCPSVSPSTTQN) are disordered. The segment covering 291–308 (PNENSGSCPSVSPSTTQN) has biased composition (polar residues).

It localises to the nucleus. In terms of biological role, transcription factor that acts as the main regulator of the gene cluster that mediates the biosynthesis of sorbicillinoids, a diverse group of yellow secondary metabolites that restrict growth of competing pathogenic fungi but not of bacteria. The chain is Sorbicillinoid biosynthetic cluster transcription factor 1 from Penicillium rubens (strain ATCC 28089 / DSM 1075 / NRRL 1951 / Wisconsin 54-1255) (Penicillium chrysogenum).